The sequence spans 176 residues: Gamma-crystallin M2 (176 aa).

Beta/gamma crystallin 'Greek key' domains are found at residues 2 to 40 (GKVI…RVEG) and 41 to 83 (GCWV…RIIP). A connecting peptide region spans residues 84–88 (QYRGS). Beta/gamma crystallin 'Greek key' domains follow at residues 89 to 129 (YRMR…HVMD) and 130 to 172 (GYWI…RRIM).

It belongs to the beta/gamma-crystallin family. As to quaternary structure, monomer.

Crystallins are the dominant structural components of the vertebrate eye lens. This Chiloscyllium indicum (Slender bamboo shark) protein is Gamma-crystallin M2 (GM2).